The primary structure comprises 338 residues: Lipoate-protein ligase A (338 aa).

One can recognise a BPL/LPL catalytic domain in the interval 29–216 (PATQRVLFLW…AFFAHYGERV (188 aa)). Residues Arg71, 76–79 (GAVF), and Lys134 each bind ATP. Lys134 is a (R)-lipoate binding site.

This sequence belongs to the LplA family. Monomer.

The protein resides in the cytoplasm. It catalyses the reaction L-lysyl-[lipoyl-carrier protein] + (R)-lipoate + ATP = N(6)-[(R)-lipoyl]-L-lysyl-[lipoyl-carrier protein] + AMP + diphosphate + H(+). The protein operates within protein modification; protein lipoylation via exogenous pathway; protein N(6)-(lipoyl)lysine from lipoate: step 1/2. Its pathway is protein modification; protein lipoylation via exogenous pathway; protein N(6)-(lipoyl)lysine from lipoate: step 2/2. Its function is as follows. Catalyzes both the ATP-dependent activation of exogenously supplied lipoate to lipoyl-AMP and the transfer of the activated lipoyl onto the lipoyl domains of lipoate-dependent enzymes. This Salmonella dublin (strain CT_02021853) protein is Lipoate-protein ligase A.